Here is a 412-residue protein sequence, read N- to C-terminus: Imidazolonepropionase (412 aa).

Fe(3+) is bound by residues His76 and His78. Zn(2+)-binding residues include His76 and His78. Residues Arg85, Tyr148, and His181 each contribute to the 4-imidazolone-5-propanoate site. Tyr148 provides a ligand contact to N-formimidoyl-L-glutamate. His242 contributes to the Fe(3+) binding site. A Zn(2+)-binding site is contributed by His242. 4-imidazolone-5-propanoate is bound at residue Glu245. Asp317 is a Fe(3+) binding site. A Zn(2+)-binding site is contributed by Asp317. The N-formimidoyl-L-glutamate site is built by Asn319 and Gly321. Ser322 serves as a coordination point for 4-imidazolone-5-propanoate.

The protein belongs to the metallo-dependent hydrolases superfamily. HutI family. The cofactor is Zn(2+). Requires Fe(3+) as cofactor.

The protein localises to the cytoplasm. It catalyses the reaction 4-imidazolone-5-propanoate + H2O = N-formimidoyl-L-glutamate. It participates in amino-acid degradation; L-histidine degradation into L-glutamate; N-formimidoyl-L-glutamate from L-histidine: step 3/3. Its function is as follows. Catalyzes the hydrolytic cleavage of the carbon-nitrogen bond in imidazolone-5-propanoate to yield N-formimidoyl-L-glutamate. It is the third step in the universal histidine degradation pathway. The protein is Imidazolonepropionase of Staphylococcus saprophyticus subsp. saprophyticus (strain ATCC 15305 / DSM 20229 / NCIMB 8711 / NCTC 7292 / S-41).